We begin with the raw amino-acid sequence, 493 residues long: Glutamyl-tRNA(Gln) amidotransferase subunit A (493 aa).

Active-site charge relay system residues include Lys-79 and Ser-159. Ser-183 acts as the Acyl-ester intermediate in catalysis.

It belongs to the amidase family. GatA subfamily. As to quaternary structure, heterotrimer of A, B and C subunits.

The enzyme catalyses L-glutamyl-tRNA(Gln) + L-glutamine + ATP + H2O = L-glutaminyl-tRNA(Gln) + L-glutamate + ADP + phosphate + H(+). Allows the formation of correctly charged Gln-tRNA(Gln) through the transamidation of misacylated Glu-tRNA(Gln) in organisms which lack glutaminyl-tRNA synthetase. The reaction takes place in the presence of glutamine and ATP through an activated gamma-phospho-Glu-tRNA(Gln). This chain is Glutamyl-tRNA(Gln) amidotransferase subunit A, found in Agrobacterium fabrum (strain C58 / ATCC 33970) (Agrobacterium tumefaciens (strain C58)).